We begin with the raw amino-acid sequence, 553 residues long: Zinc finger matrin-type protein 1 (553 aa).

Residues T16 to N36 are disordered. Matrin-type zinc fingers lie at residues T61–L91, K125–Q155, K223–R253, and Y275–M305. 2 disordered regions span residues Q341–V402 and H428–F553. The span at D350–P362 shows a compositional bias: acidic residues. Residues R431–S453 are compositionally biased toward low complexity. A compositionally biased stretch (basic residues) spans K456–I476. Positions R477–D513 are enriched in basic and acidic residues.

Its subcellular location is the nucleus. The polypeptide is Zinc finger matrin-type protein 1 (zmat1) (Xenopus tropicalis (Western clawed frog)).